The following is a 395-amino-acid chain: GPI-anchor transamidase (395 aa).

An N-terminal signal peptide occupies residues 1–27 (MAVTDSLSRAATVLATVLLLSFGSVAA). The Lumenal portion of the chain corresponds to 28 to 368 (SHIEDQAEQF…PKLKDWHPPG (341 aa)). Ca(2+)-binding residues include Asp-79, Ile-82, Glu-118, and Asp-120. His-164 acts as the Proton donor in catalysis. Cys-206 serves as the catalytic Nucleophile; acyl-thioester intermediate. Residues Cys-206, Ser-232, and Ser-234 each contribute to the a protein site. Residues 231 to 236 (DSLSHQ) are autoinhibitory loop. Cys-275 and Cys-280 are disulfide-bonded. The helical transmembrane segment at 369-385 (GFILGLWALIIMVFFKT) threads the bilayer. At 386-395 (YGIKHMKFIF) the chain is on the cytoplasmic side.

Belongs to the peptidase C13 family. As to quaternary structure, heteropentamer. Part of the GPI-anchor transamidase complex, consisting of PIGK, PIGT, PIGS, PIGU and GAA1. Interacts with GPAA1. Interacts with PIGT; this interaction, via a disulfide link, stabilizes the expression of GAA1 and PIGK and links them to PIGS. The disulfide bond between PIGK/GPI8 and PIGT is important for normal enzyme activity.

It localises to the endoplasmic reticulum membrane. The protein operates within glycolipid biosynthesis; glycosylphosphatidylinositol-anchor biosynthesis. In the absence of proproteins substrates, exists in an inactive state with a disrupted catalytic site by an autoinhibitory loop. The binding of proprotein substrates, particularly the CSP region, to GPI-T triggers concerted conformational changes that alleviate the inhibition by the autoinhibitory loop. Meanwhile, proprotein residues near the omega- site induce the formation of a catalytic cleft for catalysis, following which the products are released and GPI-T reverts to the inactive state. Functionally, catalytic subunit of the glycosylphosphatidylinositol-anchor (GPI-anchor) transamidase (GPI-T) complex that catalyzes the formation of the linkage between a proprotein and a GPI-anchor and participates in GPI anchored protein biosynthesis. Recognizes diverse proproteins at a C-terminal signal peptide (CSP) region that lacks consensus sequence and replaces it with a GPI-anchor via a transamidation reaction. Transamidation catalysis reaction follows a two-phase mechanism. In the acyl-enzyme phase, the carbonyl group of the proproteins's omega-site undergoes a nucleophilic attack forming an enzyme-substrate thioester bond. Followed by a general acid catalysis that allows CSP releasing, regenerating the carbonyl, and forming the acyl-enzyme intermediate. In the GPI-anchor attachment phase, the amino group of the GPI-anchor's ethanolamine phosphate, the one on third mannose (EtNP3), mediates a nucleophilic attack on the carbonyl of the acyl-enzyme intermediate, replacing the CSP, allowing GPI-anchor attachment to the omega-residue, therefore forming the product and freeing the enzyme. The protein is GPI-anchor transamidase of Homo sapiens (Human).